The following is a 431-amino-acid chain: Adenylosuccinate synthetase (431 aa).

GTP-binding positions include 12–18 (GDEGKGK) and 40–42 (GHT). Asp13 acts as the Proton acceptor in catalysis. Mg(2+)-binding residues include Asp13 and Gly40. Residues 13–16 (DEGK), 38–41 (NAGH), Thr130, Arg144, Gln225, Thr240, and Arg304 contribute to the IMP site. His41 functions as the Proton donor in the catalytic mechanism. 300–306 (ATTGRPR) provides a ligand contact to substrate. GTP-binding positions include Arg306, 332-334 (KLD), and 414-416 (SVG).

Belongs to the adenylosuccinate synthetase family. As to quaternary structure, homodimer. It depends on Mg(2+) as a cofactor.

The protein resides in the cytoplasm. The catalysed reaction is IMP + L-aspartate + GTP = N(6)-(1,2-dicarboxyethyl)-AMP + GDP + phosphate + 2 H(+). It participates in purine metabolism; AMP biosynthesis via de novo pathway; AMP from IMP: step 1/2. In terms of biological role, plays an important role in the de novo pathway of purine nucleotide biosynthesis. Catalyzes the first committed step in the biosynthesis of AMP from IMP. The chain is Adenylosuccinate synthetase from Anaeromyxobacter sp. (strain Fw109-5).